The primary structure comprises 377 residues: Molybdenum import ATP-binding protein ModC (377 aa).

The ABC transporter domain occupies 4–240 (IAPRSIRGEF…PALPLATARD (237 aa)). Position 38–45 (38–45 (GPSGCGKS)) interacts with ATP. Residues 299-369 (RTSILNILPA…IKGVALAPER (71 aa)) form the Mop domain.

The protein belongs to the ABC transporter superfamily. Molybdate importer (TC 3.A.1.8) family. As to quaternary structure, the complex is composed of two ATP-binding proteins (ModC), two transmembrane proteins (ModB) and a solute-binding protein (ModA).

The protein resides in the cell inner membrane. The enzyme catalyses molybdate(out) + ATP + H2O = molybdate(in) + ADP + phosphate + H(+). Its function is as follows. Part of the ABC transporter complex ModABC involved in molybdenum import. Responsible for energy coupling to the transport system. The protein is Molybdenum import ATP-binding protein ModC of Rhodopseudomonas palustris (strain HaA2).